The chain runs to 215 residues: MLTVALPKGALLKESIRLFQAIGLDFSGFLDPANRQLQIVAPTGNAQALLVRTQDVPVYVEYGQAQLGIVGYDVLREKNPQVAHLLDLQFGRCRLSVAVKQASPYRCSLDLPPHSRVASKFVHCARAYFEQMDLPVEVVPLYGSVELGPLTGMSEAIVDLVSTGRTLKENGLVELEVLFESTARLIAHPLSYRLNRFGLHQPIEQIQALLSSPVP.

It belongs to the ATP phosphoribosyltransferase family. Short subfamily. Heteromultimer composed of HisG and HisZ subunits.

The protein localises to the cytoplasm. It catalyses the reaction 1-(5-phospho-beta-D-ribosyl)-ATP + diphosphate = 5-phospho-alpha-D-ribose 1-diphosphate + ATP. Its pathway is amino-acid biosynthesis; L-histidine biosynthesis; L-histidine from 5-phospho-alpha-D-ribose 1-diphosphate: step 1/9. Functionally, catalyzes the condensation of ATP and 5-phosphoribose 1-diphosphate to form N'-(5'-phosphoribosyl)-ATP (PR-ATP). Has a crucial role in the pathway because the rate of histidine biosynthesis seems to be controlled primarily by regulation of HisG enzymatic activity. This is ATP phosphoribosyltransferase from Cyanothece sp. (strain PCC 7425 / ATCC 29141).